A 394-amino-acid chain; its full sequence is Beta-ketothiolase BktB (394 aa).

The Acyl-thioester intermediate role is filled by cysteine 90. Catalysis depends on proton acceptor residues histidine 350 and cysteine 380.

It belongs to the thiolase-like superfamily. Thiolase family.

It catalyses the reaction an acyl-CoA + acetyl-CoA = a 3-oxoacyl-CoA + CoA. The catalysed reaction is 2 acetyl-CoA = acetoacetyl-CoA + CoA. In terms of biological role, required for efficient production of poly(beta-hydroxybutyrate-co-beta-hydroxyvalerate) (PHBV). Catalyzes the condensation of acetyl-CoA and propionyl-CoA to form beta-ketovaleryl-CoA, and the condensation of two acetyl-CoA molecules to form acetoacetyl-CoA. In Cupriavidus necator (strain ATCC 17699 / DSM 428 / KCTC 22496 / NCIMB 10442 / H16 / Stanier 337) (Ralstonia eutropha), this protein is Beta-ketothiolase BktB (bktB).